We begin with the raw amino-acid sequence, 432 residues long: FAD-dependent monooxygenase pynG (432 aa).

The FAD site is built by E32, R103, D315, and A328.

Belongs to the paxM FAD-dependent monooxygenase family. FAD is required as a cofactor.

The protein operates within secondary metabolite biosynthesis. FAD-dependent monooxygenase; part of the gene cluster that mediates the biosynthesis of pyranonigrins, a family of antioxidative compounds. The first step of pyranonigrins biosynthesis is performed by the hybrid PKS-NRPS synthetase that condenses 6 malonyl-CoA units to an acetyl starter unit, to form a 1,3,5-trioxotetradecane-6,8-dienyl-ACP. The enoyl reductase (ER) domain of pynA is likely to be functional during the first two rounds of polyketide chain extension, to generate the saturated C-C bonds of the alkyl side chain. PynA subsequently forms the amide bond between the acyl chain and L-serine. Although pynA has a terminal reductase domain, it appears to require the thioesterase pynI for the release of the straight-chain intermediate from pynA via the formation of a tetramic acid pyranonigrin J. The methyltransferase pynC then coverts pyranonigrin J to pyranonigrin I via N-methylation. The FAD-dependent monooxygenase pynG catalyzes an epoxidation-mediated cyclization to form the dihydro-gamma-pyrone moiety, followed by pynD-catalyzed oxidation of the alcohol to the ketone and enolization to yield the characteristic tetramic acid-fused gamma-pyrone core of pyranonigrin H. Pyranonigrin H is substrate of pynH for dehydration-mediated exo-methylene formation from the serine side chain to produce pyranonigrin E, before the oxidase pynE reduces the exo-methylene of pyranonigrin E into a pendant methyl to form pyranonigrin G. The FAD-linked oxidoreductase pynB performs the reverse reaction and converts pyranonigrin G back to pyranonigrin E. This is FAD-dependent monooxygenase pynG from Aspergillus niger (strain ATCC MYA-4892 / CBS 513.88 / FGSC A1513).